The sequence spans 572 residues: Alpha-1D adrenergic receptor (572 aa).

Residues methionine 1–alanine 77 are disordered. Residues methionine 1–glutamine 95 are Extracellular-facing. Composition is skewed to gly residues over residues serine 23–glycine 33 and alanine 42–serine 61. N-linked (GlcNAc...) asparagine glycans are attached at residues asparagine 65 and asparagine 82. Residues glycine 96–valine 121 traverse the membrane as a helical segment. The Cytoplasmic portion of the chain corresponds to alanine 122–tyrosine 133. A helical transmembrane segment spans residues phenylalanine 134 to leucine 159. Residues glycine 160–cysteine 169 are Extracellular-facing. Residues aspartate 170–valine 192 form a helical membrane-spanning segment. Over aspartate 193–alanine 213 the chain is Cytoplasmic. The chain crosses the membrane as a helical span at residues alanine 214–proline 238. At valine 239 to glutamate 251 the chain is on the extracellular side. Residues alanine 252–cysteine 275 traverse the membrane as a helical segment. Residues arginine 276–lysine 348 lie on the Cytoplasmic side of the membrane. A helical membrane pass occupies residues threonine 349–leucine 373. The Extracellular portion of the chain corresponds to phenylalanine 374–serine 380. A helical transmembrane segment spans residues glutamate 381–serine 405. At serine 406 to isoleucine 572 the chain is on the cytoplasmic side. Cysteine 419 carries the S-palmitoyl cysteine lipid modification. Positions glycine 444–arginine 488 are disordered. Low complexity predominate over residues alanine 450–proline 468.

It belongs to the G-protein coupled receptor 1 family. Adrenergic receptor subfamily. ADRA1D sub-subfamily. As to quaternary structure, interacts with FLNA (via filamin repeat 21); increases PKA-mediated phosphorylation of FLNA. Post-translationally, palmitoylated. Palmitoylation by ZDHHC21 may increase the expression of the receptor and regulate downstream signaling.

It is found in the cell membrane. Functionally, this alpha-adrenergic receptor mediates its effect through the influx of extracellular calcium. This Homo sapiens (Human) protein is Alpha-1D adrenergic receptor (ADRA1D).